The primary structure comprises 343 residues: Biotin synthase 2 (343 aa).

The Radical SAM core domain maps to 58–285 (NEVQLSTLLS…LTMVRLSAGR (228 aa)). 3 residues coordinate [4Fe-4S] cluster: cysteine 73, cysteine 77, and cysteine 80. [2Fe-2S] cluster is bound by residues cysteine 117, cysteine 148, cysteine 208, and arginine 280.

It belongs to the radical SAM superfamily. Biotin synthase family. Homodimer. Requires [4Fe-4S] cluster as cofactor. The cofactor is [2Fe-2S] cluster.

It catalyses the reaction (4R,5S)-dethiobiotin + (sulfur carrier)-SH + 2 reduced [2Fe-2S]-[ferredoxin] + 2 S-adenosyl-L-methionine = (sulfur carrier)-H + biotin + 2 5'-deoxyadenosine + 2 L-methionine + 2 oxidized [2Fe-2S]-[ferredoxin]. The protein operates within cofactor biosynthesis; biotin biosynthesis; biotin from 7,8-diaminononanoate: step 2/2. Functionally, catalyzes the conversion of dethiobiotin (DTB) to biotin by the insertion of a sulfur atom into dethiobiotin via a radical-based mechanism. In Polaromonas sp. (strain JS666 / ATCC BAA-500), this protein is Biotin synthase 2.